The chain runs to 643 residues: MSSPSPSSSSSDHPSSPAPVPAPPGPVPEAAAASRASRAPVYLGGFVDVFSYPKDSRALYLNPADVGAHLPLPGPIPLNVEHLQEAHVGWTLGLHLTRYGLFCVAVITAEEFFTLLDRLCAASSVARTRADHHLPPNPTLEMLHTWLPELSLSSIHPDALPGAKGGDTPIFQHVALCAMGQRRGTVAVYGESLDWILSKFTSLSPEERGAIAEGYASPAPESLPEPHFTCSNEILMAKAIDAGFIKNRLEILKTDKGVAEVKAPTYLKASVQGLPANLDEVDSARGGEDPPTAAIATTPHPATDATTMNQQQPFAAQAPAGGCEDLISVPRSTFMTMLQTNLDTMRQTSLGQRFGQPIDAPAAPPAQLRVPPPAAPFPVHPGYYPAPYHPQVDAQAQYLPYVPLPPPGAMPFAPPPLPDFYKYGGIPAPGYSPVAHPARPGKRKRDCDEEFEGPLFPGEIHKDVQSLSKSIAALQSELKDIKNSQQFPQPLPQPQLQPQAQPQPQPAPQLYPAPPQAFYHPAAGDQGYYVRYLNPFQASGGVPCAPGPQGVGEPQAPQVTVTHNGHQAAPQAGGGATGATAANVEQRQPEGGEACGAQQQQPPQPQPQQQQQPQQQAFVEASTKPSQISQLQKIFCEELLNKT.

Residues 1–15 are compositionally biased toward low complexity; the sequence is MSSPSPSSSSSDHPS. Positions 1–31 are disordered; sequence MSSPSPSSSSSDHPSSPAPVPAPPGPVPEAA. Residues 16–27 show a composition bias toward pro residues; sequence SPAPVPAPPGPV. Residues histidine 82, serine 151, and histidine 173 each act as charge relay system in the active site. Positions 283-306 are disordered; the sequence is SARGGEDPPTAAIATTPHPATDAT. Residues 290 to 306 show a composition bias toward low complexity; it reads PPTAAIATTPHPATDAT. Residues 324 to 343 are interaction with pAP; sequence EDLISVPRSTFMTMLQTNLD. A Nuclear localization signal motif is present at residues 439–445; the sequence is RPGKRKR. Disordered stretches follow at residues 485–519 and 544–625; these read QQFP…QAFY and CAPG…STKP. Residues 489-515 show a composition bias toward pro residues; sequence QPLPQPQLQPQAQPQPQPAPQLYPAPP. Positions 607–616 are enriched in low complexity; it reads PQQQQQPQQQ. The interval 623–643 is interaction with major capsid protein; it reads TKPSQISQLQKIFCEELLNKT.

It belongs to the herpesviridae capsid scaffolding protein family. As to quaternary structure, homomultimer. Interacts with major capsid protein. Exists in a monomer-dimer equilibrium with the dimer being the active species. In terms of processing, capsid scaffolding protein is cleaved by assemblin after formation of the spherical procapsid. As a result, the capsid obtains its mature, icosahedral shape. Cleavages occur at two or more sites: release (R-site) and maturation (M-site).

The protein localises to the host cytoplasm. The protein resides in the host nucleus. The enzyme catalyses Cleaves -Ala-|-Ser- and -Ala-|-Ala- bonds in the scaffold protein.. Functionally, acts as a scaffold protein by binding major capsid protein in the cytoplasm, inducing the nuclear localization of both proteins. Multimerizes in the nucleus such as major capsid protein forms the icosahedral T=16 capsid. Autocatalytic cleavage releases the assembly protein, and subsequently abolishes interaction with major capsid protein. Cleavages products are evicted from the capsid before or during DNA packaging. Protease that plays an essential role in virion assembly within the nucleus. Catalyzes the cleavage of the assembly protein after formation of the spherical procapsid. By that cleavage, the capsid matures and gains its icosahedral shape. The cleavage sites seem to include -Ala-Ser-, -Ala-Ala-, as well as Ala-Thr bonds. Assemblin and cleavages products are evicted from the capsid before or during DNA packaging. Its function is as follows. Plays a major role in capsid assembly. Acts as a scaffold protein by binding major capsid protein. Multimerizes in the nucleus such as major capsid protein forms the icosahedral T=16 capsid. Cleaved by assemblin after capsid completion. The cleavages products are evicted from the capsid before or during DNA packaging. The protein is Capsid scaffolding protein of Equine herpesvirus 2 (strain 86/87) (EHV-2).